The sequence spans 390 residues: Probable purine permease 10 (390 aa).

Helical transmembrane passes span tryptophan 44–leucine 64, leucine 78–phenylalanine 98, valine 117–glycine 137, tyrosine 140–phenylalanine 160, leucine 169–phenylalanine 189, tyrosine 204–leucine 224, valine 241–phenylalanine 261, leucine 287–glutamate 307, phenylalanine 312–phenylalanine 332, and methionine 336–tyrosine 356. Residues glutamate 370–lysine 390 form a disordered region.

It belongs to the purine permeases (TC 2.A.7.14) family.

It localises to the membrane. This chain is Probable purine permease 10 (PUP10), found in Arabidopsis thaliana (Mouse-ear cress).